An 858-amino-acid chain; its full sequence is Zinc finger protein ZXDC (858 aa).

Disordered regions lie at residues 1-127 (MDLP…APAG) and 151-174 (PGPA…STPG). Composition is skewed to low complexity over residues 23–35 (PLRR…GASP), 84–97 (GGAA…QEAE), and 151–171 (PGPA…SGPS). S34 carries the phosphoserine modification. Phosphothreonine is present on T172. 10 C2H2-type zinc fingers span residues 175–199 (YRCP…LLTH), 208–232 (FKCP…LQSH), 238–262 (FGCP…MKGH), 268–290 (FKCE…QRSH), 297–321 (YKCD…NRAH), 328–352 (FSCS…LRSH), 358–382 (FICD…RRKH), 388–412 (FTCP…SITH), 418–442 (FECP…SKKH), and 451–476 (SRCP…VRQH). The interval 579–688 (DSPLVLGTAA…HGLPQSTLPS (110 aa)) is required for transcriptional activation. Residue K660 forms a Glycyl lysine isopeptide (Lys-Gly) (interchain with G-Cter in SUMO) linkage. Disordered stretches follow at residues 660 to 696 (KVEP…HGAQ), 726 to 756 (KEKK…SPPH), and 837 to 858 (GGPA…QDLQ). S665 is modified (phosphoserine). Residues 675-687 (QEGSHGLPQSTLP) show a composition bias toward polar residues. The interval 781-858 (PAAGVQCGAQ…GSTINLQDLQ (78 aa)) is interaction with CIITA. Positions 847–858 (FPGSTINLQDLQ) are enriched in polar residues.

This sequence belongs to the ZXD family. In terms of assembly, self-associates. Interacts with ZXDA and CIITA. In terms of processing, sumoylated at Lys-660 with SUMO1, SUMO2 and SUMO3; sumoylation enhances the activity of the transcriptional activation domain. Expressed at high levels in heart, kidney, liver and testis, at moderate levels in brain and stomach, and at low levels in lung, muscle, placenta, small intestine and spleen.

Its subcellular location is the nucleus. In terms of biological role, cooperates with CIITA to promote transcription of MHC class I and MHC class II genes. In Homo sapiens (Human), this protein is Zinc finger protein ZXDC (ZXDC).